The sequence spans 293 residues: Actin-related protein 2/3 complex subunit 2 (293 aa).

The protein belongs to the ARPC2 family. As to quaternary structure, component of the Arp2/3 complex composed of arpB/Arp2, arpC/Arp3, arcA/p41-arc, arcB/p34-arc, arcC/p21-arc, arcD/p20-arc and arcE/p16-arc. Interacts with carmil (via the region between the LRR domain and COOH-terminal proline-rich domain); carmil is required for Arp2/3-dependent actin nucleation. Arp2/3 complex, MyoB, MyoC, and the alpha and beta subunits of capping protein all form a larger complex with carmil.

The protein resides in the cytoplasm. It localises to the cytoskeleton. The protein localises to the cell projection. It is found in the cytosol. Its subcellular location is the cell cortex. The protein resides in the pseudopodium. Its function is as follows. Functions as a component of the Arp2/3 complex which is involved in regulation of actin polymerization and together with an activating nucleation-promoting factor (NPF) mediates the formation of branched actin networks. Seems to contact the pointed end of the daughter actin filament. The Arp2/3 complex is involved in organizing the actin system in cell motility and chemotaxis, in phagocytosis and macropinocytosis, at late steps of endosome processing, and in mitosis. In concert with a group of other proteins, the Arp2/3 complex plays a general role in the rapid activation and adaptation of the actin system to its multiple functions. The chain is Actin-related protein 2/3 complex subunit 2 (arcB) from Dictyostelium discoideum (Social amoeba).